The primary structure comprises 194 residues: Protein cholesin (194 aa).

The tract at residues methionine 1 to arginine 83 is disordered. Phosphoserine is present on residues serine 23 and serine 59. Positions glutamate 61–arginine 83 are enriched in basic and acidic residues. Serine 97 and serine 175 each carry phosphoserine.

Secreted from the instestine, secretion is induced by feeding and cholesterol absorption.

It localises to the secreted. In terms of biological role, hormone secreted from the intestine in response to cholesterol, where it acts to inhibit cholesterol synthesis in the liver and VLDL secretion,leading to a reduction in circulating cholesterol levels. Acts through binding to its receptor, GPR146. The chain is Protein cholesin from Homo sapiens (Human).